The chain runs to 417 residues: Serine hydroxymethyltransferase (417 aa).

(6S)-5,6,7,8-tetrahydrofolate is bound by residues Leu-121 and 125-127 (GHL). Position 229 is an N6-(pyridoxal phosphate)lysine (Lys-229). 355-357 (SPF) contacts (6S)-5,6,7,8-tetrahydrofolate.

This sequence belongs to the SHMT family. As to quaternary structure, homodimer. Pyridoxal 5'-phosphate is required as a cofactor.

It is found in the cytoplasm. It catalyses the reaction (6R)-5,10-methylene-5,6,7,8-tetrahydrofolate + glycine + H2O = (6S)-5,6,7,8-tetrahydrofolate + L-serine. It functions in the pathway one-carbon metabolism; tetrahydrofolate interconversion. Its pathway is amino-acid biosynthesis; glycine biosynthesis; glycine from L-serine: step 1/1. Catalyzes the reversible interconversion of serine and glycine with tetrahydrofolate (THF) serving as the one-carbon carrier. This reaction serves as the major source of one-carbon groups required for the biosynthesis of purines, thymidylate, methionine, and other important biomolecules. Also exhibits THF-independent aldolase activity toward beta-hydroxyamino acids, producing glycine and aldehydes, via a retro-aldol mechanism. This is Serine hydroxymethyltransferase from Shewanella sp. (strain W3-18-1).